The sequence spans 206 residues: uncharacterized protein (206 aa).

Disordered stretches follow at residues 64–123 (NTES…DPSL) and 155–206 (VTTP…SSGG). Residues 66–79 (ESTQKTATTQQQGL) show a composition bias toward polar residues. Over residues 97 to 107 (AENNAQANQSE) the composition is skewed to low complexity. Basic and acidic residues predominate over residues 108-118 (NRAESTTKAES). Over residues 155–167 (VTTPTGQVVQPQT) the composition is skewed to low complexity. Positions 182–198 (GSMNSKPVSRGGFSSPN) are enriched in polar residues.

This is an uncharacterized protein from Haemophilus influenzae (strain ATCC 51907 / DSM 11121 / KW20 / Rd).